The primary structure comprises 380 residues: Cytochrome b (380 aa).

The next 4 helical transmembrane spans lie at 34–54 (FGSL…LLAA), 78–99 (WLIR…YLHI), 114–134 (WNTG…GYVL), and 179–199 (FFTL…IHLT). Histidine 84 and histidine 98 together coordinate heme b. The heme b site is built by histidine 183 and histidine 197. Histidine 202 contributes to the a ubiquinone binding site. The next 4 membrane-spanning stretches (helical) occupy residues 227 to 247 (TKDI…ALFS), 289 to 309 (LGGV…PLLH), 321 to 341 (LSQL…WIGS), and 348 to 368 (FIII…ILFP).

This sequence belongs to the cytochrome b family. As to quaternary structure, the cytochrome bc1 complex contains 11 subunits: 3 respiratory subunits (MT-CYB, CYC1 and UQCRFS1), 2 core proteins (UQCRC1 and UQCRC2) and 6 low-molecular weight proteins (UQCRH/QCR6, UQCRB/QCR7, UQCRQ/QCR8, UQCR10/QCR9, UQCR11/QCR10 and a cleavage product of UQCRFS1). This cytochrome bc1 complex then forms a dimer. The cofactor is heme b.

It is found in the mitochondrion inner membrane. Its function is as follows. Component of the ubiquinol-cytochrome c reductase complex (complex III or cytochrome b-c1 complex) that is part of the mitochondrial respiratory chain. The b-c1 complex mediates electron transfer from ubiquinol to cytochrome c. Contributes to the generation of a proton gradient across the mitochondrial membrane that is then used for ATP synthesis. The protein is Cytochrome b (MT-CYB) of Eudyptes chrysocome (Western rockhopper penguin).